A 207-amino-acid polypeptide reads, in one-letter code: NADH-quinone oxidoreductase subunit C (207 aa).

This sequence belongs to the complex I 30 kDa subunit family. As to quaternary structure, NDH-1 is composed of 14 different subunits. Subunits NuoB, C, D, E, F, and G constitute the peripheral sector of the complex.

It is found in the cell inner membrane. The enzyme catalyses a quinone + NADH + 5 H(+)(in) = a quinol + NAD(+) + 4 H(+)(out). NDH-1 shuttles electrons from NADH, via FMN and iron-sulfur (Fe-S) centers, to quinones in the respiratory chain. The immediate electron acceptor for the enzyme in this species is believed to be ubiquinone. Couples the redox reaction to proton translocation (for every two electrons transferred, four hydrogen ions are translocated across the cytoplasmic membrane), and thus conserves the redox energy in a proton gradient. This is NADH-quinone oxidoreductase subunit C from Bordetella pertussis (strain Tohama I / ATCC BAA-589 / NCTC 13251).